The chain runs to 357 residues: MAKKPALTPEEMRREALSTALSTIERKYGQGSVMKLSDTAHVNIPVIPTGSIGLDLALGVGGIPRGRVSEIYGPESSGKTTLALHIIAECQKLGGTAAFIDAEHALDTNYARRLGVKTDELLISQPDFGEQALDIADMLVRSSAVDIVVIDSVAALIPQAELEGVMGEMQVGGQARLMSHALRKLTGTIHKSRTAVIFINQIRMKIGTMGYGNPETTTGGNALKFYSSIRMDIRKIQTLKDKEEVYGSRTRVKVVKNKVAPPFREALFDILYGTGISRTGELIDLGSDVGIIEKSGSWFAFGSERLGQGKENVRALLEENEALRLNVEAKLIEHLGMMPSKVVDPDDNAGAMDDDEF.

ATP is bound at residue 73 to 80 (GPESSGKT).

This sequence belongs to the RecA family.

Its subcellular location is the cytoplasm. Functionally, can catalyze the hydrolysis of ATP in the presence of single-stranded DNA, the ATP-dependent uptake of single-stranded DNA by duplex DNA, and the ATP-dependent hybridization of homologous single-stranded DNAs. It interacts with LexA causing its activation and leading to its autocatalytic cleavage. In Nitratidesulfovibrio vulgaris (strain DSM 19637 / Miyazaki F) (Desulfovibrio vulgaris), this protein is Protein RecA.